The chain runs to 1486 residues: Chromosome partition protein MukB (1486 aa).

An ATP-binding site is contributed by 34-41; the sequence is GGNGAGKS. Coiled coils occupy residues 326 to 418, 444 to 480, and 509 to 603; these read LEAD…QYNQ, LETF…QAYQ, and RHLA…RAPV. The tract at residues 666 to 783 is flexible hinge; the sequence is PGGSEDQRLN…EVPLFGRAAR (118 aa). Coiled coils occupy residues 835–923, 977–1115, and 1209–1266; these read EAEI…AKLE, EMLS…TAKA, and VEAI…QNVS.

The protein belongs to the SMC family. MukB subfamily. In terms of assembly, homodimerization via its hinge domain. Binds to DNA via its C-terminal region. Interacts, and probably forms a ternary complex, with MukE and MukF via its C-terminal region. The complex formation is stimulated by calcium or magnesium. Interacts with tubulin-related protein FtsZ.

The protein localises to the cytoplasm. It is found in the nucleoid. Functionally, plays a central role in chromosome condensation, segregation and cell cycle progression. Functions as a homodimer, which is essential for chromosome partition. Involved in negative DNA supercoiling in vivo, and by this means organize and compact chromosomes. May achieve or facilitate chromosome segregation by condensation DNA from both sides of a centrally located replisome during cell division. In Escherichia fergusonii (strain ATCC 35469 / DSM 13698 / CCUG 18766 / IAM 14443 / JCM 21226 / LMG 7866 / NBRC 102419 / NCTC 12128 / CDC 0568-73), this protein is Chromosome partition protein MukB.